A 51-amino-acid chain; its full sequence is Ovomucoid (51 aa).

Positions 3–51 constitute a Kazal-like domain; it reads VDCSGYPKPDCTLESFPLCGSDNQTYSNKCAFCNAAVERNVTLRHLGEC. Intrachain disulfides connect Cys-5-Cys-35, Cys-13-Cys-32, and Cys-21-Cys-51. An N-linked (GlcNAc...) asparagine glycan is attached at Asn-42.

It localises to the secreted. This chain is Ovomucoid, found in Rhynchotus rufescens (Red-winged tinamou).